Consider the following 145-residue polypeptide: MEILIKNKRANFDYEIIDRFTAGIVLLGWEVKSIQAKNISLVGAFCYFKGHELFLSNAKISEYKGSRGQTDRSRKLLMHKHELKKILKEKITRKLAIIPLFIGQKNRKIKLEIALAKGKTKLDKRNLIKERDQKREAAKFLKNYY.

This sequence belongs to the SmpB family.

It localises to the cytoplasm. Required for rescue of stalled ribosomes mediated by trans-translation. Binds to transfer-messenger RNA (tmRNA), required for stable association of tmRNA with ribosomes. tmRNA and SmpB together mimic tRNA shape, replacing the anticodon stem-loop with SmpB. tmRNA is encoded by the ssrA gene; the 2 termini fold to resemble tRNA(Ala) and it encodes a 'tag peptide', a short internal open reading frame. During trans-translation Ala-aminoacylated tmRNA acts like a tRNA, entering the A-site of stalled ribosomes, displacing the stalled mRNA. The ribosome then switches to translate the ORF on the tmRNA; the nascent peptide is terminated with the 'tag peptide' encoded by the tmRNA and targeted for degradation. The ribosome is freed to recommence translation, which seems to be the essential function of trans-translation. The sequence is that of SsrA-binding protein from Mesomycoplasma hyopneumoniae (strain 232) (Mycoplasma hyopneumoniae).